The sequence spans 432 residues: Transcriptional adapter 3 (432 aa).

Residue Lys21 forms a Glycyl lysine isopeptide (Lys-Gly) (interchain with G-Cter in SUMO2) linkage. The stretch at Ile40–Gln69 forms a coiled coil. The disordered stretch occupies residues Gly87–Gln127. Lys129 participates in a covalent cross-link: Glycyl lysine isopeptide (Lys-Gly) (interchain with G-Cter in SUMO2). The disordered stretch occupies residues Asn272 to Lys319. Phosphoserine is present on residues Ser280 and Ser298. Polar residues predominate over residues Ala295 to Pro305. A coiled-coil region spans residues Leu367–Thr407. N6-acetyllysine is present on Lys418.

This sequence belongs to the NGG1 family. In terms of assembly, the PCAF complex is composed of a number of TBP-associated factors (TAFS), such as TAF5, TAF5L, TAF6, TAF6L, TAF9, TAF10 and TAF12, PCAF, and also PCAF-associated factors (PAFs), such as TADA2L/ADA2, TADA3L/ADA3 and SPT3. Interacts directly with TADA2L and PCAF and also with the high-risk HPV oncoprotein E6. Component of the STAGA transcription coactivator-HAT complex, at least composed of SUPT3H, GCN5L2, TAF5L, TAF6L, SUPT7L, TADA3L, TAD1L, TAF10, TAF12, TRRAP and TAF9. Component of the TFTC-HAT complex. Component of the ADA2A-containing complex (ATAC), composed of KAT14, KAT2A, TADA2L, TADA3L, ZZ3, MBIP, WDR5, YEATS2, CCDC101 and DR1.

Its subcellular location is the nucleus. Functions as a component of the PCAF complex. The PCAF complex is capable of efficiently acetylating histones in a nucleosomal context. The PCAF complex could be considered as the human version of the yeast SAGA complex. Also known as a coactivator for p53/TP53-dependent transcriptional activation. Component of the ATAC complex, a complex with histone acetyltransferase activity on histones H3 and H4. The protein is Transcriptional adapter 3 (Tada3) of Mus musculus (Mouse).